The chain runs to 1419 residues: MEGTHCTLQLHKPITELCYISFCLPKGEVRGFSYKGTVTLDRSNKGFHNCYQVREESDIISLSQEPDEHPGDIFFKQTPTKDILTELYKLTTERERLLTNLLSSDHILGITMGNQEGKLQELSVSLAPEDDCFQSAGDWQGELPVGPLNKRSTHGNKKPRRSSGRRESFGALPQKRTKRKGRGGRESAPLMGKDKICSSHSLPLSRTRPNLWVLEEKGNLLPNGALACSLQRRESCPPDIPKTPDTDLGFGSFETAFKDTGLGREVLPPDCSSTEAGGDGIRRPPSGLEHQQTGLSESHQDPEKHPEAEKDEMEKPAKRTCKQKPVSKVVAKVQDLSSQVQRVVKTHSKGKETIAIRPAAHAEFVPKADLLTLPGAEAGAHGSRRQGKERQGDRSSQSPAGETASISSVSASAEGAVNKVPLKVIESEKLDEAPEGKRLGFPVHTSVPHTRPETRNKRRAGLPLGGHKSLFLDLPHKVGPDSSQPRGDKKKPSPPAPAALGKVFNNSASQSSTHKQTSPVPSPLSPRLPSPQQHHRILRLPALPGEREAALNDSPCRKSRVFSGCVSADTLEPPSSAKVTETKGASPAFLRAGQPRLVPGETLEKSLGPGKTTAEPQHQSPPGISSEGFPWDGFNEQTPKDLPNRDGGAWVLGYRAGPACPFLLHEEREKSNRSELYLDLHPDHSLTEQDDRTPGRLQAVWPPPKTKDTEEKVGLKYTEAEYQAAILHLKREHKEEIENLQAQFELRAFHIRGEHAMITARLEETIENLKHELEHRWRGGCEERKDVCISTDDDCPPKTFRNVCVQTDRETFLKPCESESKTTRSNQLVPKKLNISSLSQLSPPNDHKDIHAALQPMEGMASNQQKALPPPPASIPPPPPLPSGLGSLSPAPPMPPVSAGPPLPPPPPPPPPLPPPSSAGPPPPPPPPPLPNSPAPPNPGGPPPAPPPPGLAPPPPPGLFFGLGSSSSQCPRKPAIEPSCPMKPLYWTRIQISDRSQNATPTLWDSLEEPDIRDPSEFEYLFSKDTTQQKKKPLSETYEKKNKVKKIIKLLDGKRSQTVGILISSLHLEMKDIQQAIFNVDDSVVDLETLAALYENRAQEDELVKIRKYYETSKEEELKLLDKPEQFLHELAQIPNFAERAQCIIFRSVFSEGITSLHRKVEIITRASKDLLHVKSVKDILALILAFGNYMNGGNRTRGQADGYSLEILPKLKDVKSRDNGINLVDYVVKYYLRYYDQEAGTEKSVFPLPEPQDFFLASQVKFEDLIKDLRKLKRQLEASEKQMVVVCKESPKEYLQPFKDKLEEFFQKAKKEHKMEESHLENAQKSFETTVRYFGMKPKSGEKEITPSYVFMVWYEFCSDFKTIWKRESKNISKERLKMAQESVSKLTSEKKVETKKINPTASLKERLRQKEASVTTN.

The tract at residues 1-622 (MEGTHCTLQL…TAEPQHQSPP (622 aa)) is microtubule-binding. Disordered stretches follow at residues 138–194 (DWQG…MGKD), 262–331 (LGRE…KVVA), 343–641 (VVKT…TPKD), and 685–711 (SLTE…DTEE). Residues 151–163 (RSTHGNKKPRRSS) show a composition bias toward basic residues. Positions 298–317 (SHQDPEKHPEAEKDEMEKPA) are enriched in basic and acidic residues. Residues 394–411 (RSSQSPAGETASISSVSA) show a composition bias toward polar residues. The segment covering 425 to 438 (IESEKLDEAPEGKR) has biased composition (basic and acidic residues). The tract at residues 456–842 (NKRRAGLPLG…LNISSLSQLS (387 aa)) is mediates interaction with alpha-catenin. Positions 504-517 (FNNSASQSSTHKQT) are enriched in polar residues. A compositionally biased stretch (pro residues) spans 520–529 (VPSPLSPRLP). Positions 614–623 (AEPQHQSPPG) are enriched in polar residues. The segment covering 685-694 (SLTEQDDRTP) has biased composition (basic and acidic residues). Positions 720–774 (AEYQAAILHLKREHKEEIENLQAQFELRAFHIRGEHAMITARLEETIENLKHELE) form a coiled coil. 2 disordered regions span residues 859 to 978 (GMAS…AIEP) and 1390 to 1419 (SEKK…VTTN). Pro residues-rich tracts occupy residues 868 to 882 (LPPP…PPLP) and 890 to 958 (PAPP…PPPG). The 88-residue stretch at 870 to 957 (PPPASIPPPP…PPGLAPPPPP (88 aa)) folds into the FH1 domain. Residues 972 to 1388 (RKPAIEPSCP…KMAQESVSKL (417 aa)) enclose the FH2 domain.

It belongs to the formin homology family. Cappuccino subfamily. In terms of assembly, interacts with alpha-catenin and may interact with tubulin. Phosphorylated on serine and possibly threonine residues.

Its subcellular location is the nucleus. It localises to the cytoplasm. The protein resides in the cell junction. It is found in the adherens junction. The protein localises to the cell membrane. In terms of biological role, plays a role in the formation of adherens junction and the polymerization of linear actin cables. This Homo sapiens (Human) protein is Formin-1 (FMN1).